Here is a 436-residue protein sequence, read N- to C-terminus: UPF0597 protein YhaM (436 aa).

Belongs to the UPF0597 family.

The sequence is that of UPF0597 protein YhaM from Escherichia coli (strain SE11).